Here is an 81-residue protein sequence, read N- to C-terminus: D-alanyl carrier protein (81 aa).

One can recognise a Carrier domain in the interval 1–81 (MADEAIKNGV…KIIAKVEQAQ (81 aa)). The residue at position 39 (Ser39) is an O-(pantetheine 4'-phosphoryl)serine.

It belongs to the DltC family. 4'-phosphopantetheine is transferred from CoA to a specific serine of apo-DCP.

Its subcellular location is the cytoplasm. It functions in the pathway cell wall biogenesis; lipoteichoic acid biosynthesis. Its function is as follows. Carrier protein involved in the D-alanylation of lipoteichoic acid (LTA). The loading of thioester-linked D-alanine onto DltC is catalyzed by D-alanine--D-alanyl carrier protein ligase DltA. The DltC-carried D-alanyl group is further transferred to cell membrane phosphatidylglycerol (PG) by forming an ester bond, probably catalyzed by DltD. D-alanylation of LTA plays an important role in modulating the properties of the cell wall in Gram-positive bacteria, influencing the net charge of the cell wall. In Lacticaseibacillus rhamnosus (Lactobacillus rhamnosus), this protein is D-alanyl carrier protein.